The primary structure comprises 138 residues: Large ribosomal subunit protein bL19 (138 aa).

The protein belongs to the bacterial ribosomal protein bL19 family.

In terms of biological role, this protein is located at the 30S-50S ribosomal subunit interface and may play a role in the structure and function of the aminoacyl-tRNA binding site. This Rickettsia typhi (strain ATCC VR-144 / Wilmington) protein is Large ribosomal subunit protein bL19.